Here is a 483-residue protein sequence, read N- to C-terminus: PAT complex subunit CCDC47 (483 aa).

Positions 1–20 (MKAFHTFCVVLLVFGSVSEA) are cleaved as a signal peptide. The Cytoplasmic portion of the chain corresponds to 21-135 (KFDDFEDEED…PAHLQNSWES (115 aa)). Residues 46-118 (MEDSVTESPQ…PDTSSSKNKD (73 aa)) form a disordered region. Over residues 60-104 (TEDDEDETTVELEGQDENQEGDFEDADTQEGDTESEPYDDEEFEG) the composition is skewed to acidic residues. Residues 105–118 (YEDKPDTSSSKNKD) are compositionally biased toward basic and acidic residues. The chain crosses the membrane as a helical span at residues 136-155 (YYLEILMVTGLLAYIMNYII). Residues 156–483 (GKNKNSRLAQ…KMKQIKVKAM (328 aa)) lie on the Lumenal side of the membrane. A glycan (N-linked (GlcNAc...) asparagine) is linked at asparagine 178. Positions 424-483 (QRQEAAQSRREEKKRAEKERIMNEEDPEKQRRLEEAALRREQKKLEKKQMKMKQIKVKAM) are disordered. Over residues 430 to 472 (QSRREEKKRAEKERIMNEEDPEKQRRLEEAALRREQKKLEKKQ) the composition is skewed to basic and acidic residues. Positions 450 to 483 (PEKQRRLEEAALRREQKKLEKKQMKMKQIKVKAM) form a coiled coil. A compositionally biased stretch (basic residues) spans 473–483 (MKMKQIKVKAM).

It belongs to the CCDC47 family. As to quaternary structure, component of the PAT complex, composed of WDR83OS/Asterix and CCDC47. The PAT complex is part of the multi-pass translocon (MPT) complex, composed of three subcomplexes, the GEL complex (composed of RAB5IF/OPTI and TMCO1), the BOS complex (composed of NCLN/Nicalin, NOMO and TMEM147) and the PAT complex (composed of WDR83OS/Asterix and CCDC47). The MPT complex associates with the SEC61 complex. Interacts with VCP, HSPA5, DERL1, DERL2 and SELENOS.

It localises to the endoplasmic reticulum membrane. The protein localises to the rough endoplasmic reticulum membrane. Functionally, component of the multi-pass translocon (MPT) complex that mediates insertion of multi-pass membrane proteins into the lipid bilayer of membranes. The MPT complex takes over after the SEC61 complex: following membrane insertion of the first few transmembrane segments of proteins by the SEC61 complex, the MPT complex occludes the lateral gate of the SEC61 complex to promote insertion of subsequent transmembrane regions. Within the MPT complex, the PAT subcomplex sequesters any highly polar regions in the transmembrane domains away from the non-polar membrane environment until they can be buried in the interior of the fully assembled protein. Within the PAT subcomplex, CCDC47 occludes the lateral gate of the SEC61 complex. Involved in the regulation of calcium ion homeostasis in the ER. Required for proper protein degradation via the ERAD (ER-associated degradation) pathway. Has an essential role in the maintenance of ER organization during embryogenesis. The chain is PAT complex subunit CCDC47 from Homo sapiens (Human).